Consider the following 370-residue polypeptide: Peptidyl-prolyl cis-trans isomerase D (370 aa).

Residue Ser-5 is modified to Phosphoserine. Residues 19–183 (FFDVDIGGER…KLCVIAECGE (165 aa)) enclose the PPIase cyclophilin-type domain. The residue at position 171 (Lys-171) is an N6-acetyllysine. Residues 185 to 215 (KEGDDWGIFPKDGSGDSHPDFPEDADVDLKD) form a chaperone activity region. A Phosphoserine modification is found at Ser-198. The tract at residues 214-370 (KDVDKILLIS…EKAAYAKMFA (157 aa)) is interaction with HSP90AB1. 3 TPR repeats span residues 223–256 (SEDL…VEGS), 273–306 (LSCV…DPSN), and 307–340 (TKAL…APED).

Belongs to the cyclophilin-type PPIase family. PPIase D subfamily. Identified in ESR1 or NR3C1/GCR steroid receptor-chaperone complexes. Found in HSP90 chaperone complexes with kinase clients LCK or EIF2AK1. Two monomers associate with one HSP90 homodimer. Interacts with HSP90AA1. Interacts with HSP90AB1; PPID and FKBP4 compete for binding to HSP90AB1 and the interaction is mutually exclusive with the PPID:HSPA8 interaction. Interacts with HSPA8; PPID and STIP1 but not FKBP4 compete for binding to HSPA8 and the interaction is mutually exclusive with the PPID:HSP90AB1 interaction. Interacts with S100A1 and S100A2; the interactions dissociate the PPID:HSP90AA1 interaction. Interacts with S100A6. Interacts with MYB, ILF2, XRCC6, RACK1 and RPS3. Interacts with cytoplasmic dynein 1 intermediate chain (DYNC1I1 or DYNC1I2). Post-translationally, the N-terminus is blocked. Detected in heart, thymis and brain.

The protein localises to the cytoplasm. The protein resides in the nucleus. It is found in the nucleolus. Its subcellular location is the nucleoplasm. It carries out the reaction [protein]-peptidylproline (omega=180) = [protein]-peptidylproline (omega=0). Less sensitive to inhibition by cyclosporin A than is CYP-18. Functionally, PPIase that catalyzes the cis-trans isomerization of proline imidic peptide bonds in oligopeptides and may therefore assist protein folding. Proposed to act as a co-chaperone in HSP90 complexes such as in unligated steroid receptors heterocomplexes. Different co-chaperones seem to compete for association with HSP90 thus establishing distinct HSP90-co-chaperone-receptor complexes with the potential to exert tissue-specific receptor activity control. May have a preference for estrogen receptor complexes and is not found in glucocorticoid receptor complexes. May be involved in cytoplasmic dynein-dependent movement of the receptor from the cytoplasm to the nucleus. May regulate MYB by inhibiting its DNA-binding activity. Involved in regulation of AHR signaling by promoting the formation of the AHR:ARNT dimer; the function is independent of HSP90 but requires the chaperone activity. Involved in regulation of UV radiation-induced apoptosis. In Bos taurus (Bovine), this protein is Peptidyl-prolyl cis-trans isomerase D.